A 360-amino-acid chain; its full sequence is MLVWLAEHLAKLYTGFNVFSYLTFRAIVSLLTALVISLWMGPHMIAWLQRLQIGQVVRNEGPESHFSKRGTPTMGGVMILVAIIVSVLMWANLSNPYVWCVLLVLAGYGAVGFVDDYRKVVRKDTKGLIARWKYFWQSVIALVVAFSMYAIGKDTPATQLVVPFFKDVMPQLGLLYVALAYFVIVGTSNAVNLTDGLDGLAIMPTVFVAAGFALVAWATGNMNFAGYLHIPYIRHASELVIVCTAIVGAGLGFLWFNTYPAQVFMGDVGSLALGGALGTIAVLLRQEFLLVIMGGVFVVETLSVILQVGSFKLRGQRIFRMAPIHHHYELKGWPEPRVIVRFWIISLMLVLIGLATLKVR.

10 helical membrane passes run isoleucine 27 to tryptophan 47, threonine 73 to leucine 93, serine 94 to valine 114, tryptophan 132 to glycine 152, valine 168 to serine 188, glycine 199 to threonine 219, alanine 236 to phenylalanine 256, valine 263 to leucine 283, phenylalanine 288 to valine 308, and valine 338 to lysine 358.

The protein belongs to the glycosyltransferase 4 family. MraY subfamily. Mg(2+) serves as cofactor.

Its subcellular location is the cell inner membrane. It carries out the reaction UDP-N-acetyl-alpha-D-muramoyl-L-alanyl-gamma-D-glutamyl-meso-2,6-diaminopimeloyl-D-alanyl-D-alanine + di-trans,octa-cis-undecaprenyl phosphate = di-trans,octa-cis-undecaprenyl diphospho-N-acetyl-alpha-D-muramoyl-L-alanyl-D-glutamyl-meso-2,6-diaminopimeloyl-D-alanyl-D-alanine + UMP. Its pathway is cell wall biogenesis; peptidoglycan biosynthesis. Catalyzes the initial step of the lipid cycle reactions in the biosynthesis of the cell wall peptidoglycan: transfers peptidoglycan precursor phospho-MurNAc-pentapeptide from UDP-MurNAc-pentapeptide onto the lipid carrier undecaprenyl phosphate, yielding undecaprenyl-pyrophosphoryl-MurNAc-pentapeptide, known as lipid I. The sequence is that of Phospho-N-acetylmuramoyl-pentapeptide-transferase from Pectobacterium carotovorum subsp. carotovorum (strain PC1).